The primary structure comprises 389 residues: tRNA-specific 2-thiouridylase MnmA (389 aa).

ATP is bound by residues 30–37 and Leu56; that span reads GLSGGVDS. The active-site Nucleophile is Cys117. Cys117 and Cys216 are oxidised to a cystine. Position 142 (Gly142) interacts with ATP. The interaction with tRNA stretch occupies residues 166-168; that stretch reads KDQ. The Cysteine persulfide intermediate role is filled by Cys216. Residues 321 to 322 are interaction with tRNA; the sequence is RY.

The protein belongs to the MnmA/TRMU family.

The protein resides in the cytoplasm. It carries out the reaction S-sulfanyl-L-cysteinyl-[protein] + uridine(34) in tRNA + AH2 + ATP = 2-thiouridine(34) in tRNA + L-cysteinyl-[protein] + A + AMP + diphosphate + H(+). Its function is as follows. Catalyzes the 2-thiolation of uridine at the wobble position (U34) of tRNA, leading to the formation of s(2)U34. This chain is tRNA-specific 2-thiouridylase MnmA, found in Synechococcus sp. (strain CC9902).